A 320-amino-acid polypeptide reads, in one-letter code: Tyrosine recombinase Synpcc7942_B2651 (320 aa).

Residues 16-106 form the Core-binding (CB) domain; that stretch reads VQDWDVLQML…ALKSLVRFSR (91 aa). The 187-residue stretch at 127–313 folds into the Tyr recombinase domain; the sequence is RDTTGTTPER…RQDFQGECTE (187 aa). Catalysis depends on residues arginine 167, lysine 193, histidine 264, arginine 267, and histidine 291. Residue tyrosine 300 is the O-(3'-phospho-DNA)-tyrosine intermediate of the active site.

Belongs to the 'phage' integrase family.

It is found in the cytoplasm. Site-specific tyrosine recombinase, which acts by catalyzing the cutting and rejoining of the recombining DNA molecules. The polypeptide is Tyrosine recombinase Synpcc7942_B2651 (Synechococcus elongatus (strain ATCC 33912 / PCC 7942 / FACHB-805) (Anacystis nidulans R2)).